A 319-amino-acid chain; its full sequence is MTLKLAVLRQIFQGSKGWHLWQHWRAFYSSSASGNGKLCCQTGTTDKNTHATRVVDLSYDLYDGSAPGPPLVLLHGLFGSKSNFQSIARALVRKTGRKVLTLDARNHGCSPHDDIMTYPAMSADVCQILHKLQITSCVLIGHSMGGKTAMTVALQEPKLVERFVSVDISPAATVPQTGFPHYIAAMQKVHLEGKIPRSTARRLAEEQLSSTVKEASIRQFLLTNLVQENGTFKWRVNLEVISQHLQDLLDFPEFQEPYPGPALFLGGANSPYISSENYPEIERLFPCANVEYIFGAGHWVHADKTHDFLNSICNFVESA.

The transit peptide at 1–28 directs the protein to the mitochondrion; it reads MTLKLAVLRQIFQGSKGWHLWQHWRAFY. Residues 69 to 304 form the AB hydrolase-1 domain; it reads PPLVLLHGLF…GAGHWVHADK (236 aa). Active-site charge relay system residues include Ser143, Glu239, and His298.

This sequence belongs to the AB hydrolase superfamily. Post-translationally, phosphorylated.

The protein localises to the mitochondrion. It is found in the mitochondrion matrix. The catalysed reaction is 1-octadecanoyl-2-(5Z,8Z,11Z,14Z-eicosatetraenoyl)-sn-glycerol + H2O = 2-(5Z,8Z,11Z,14Z-eicosatetraenoyl)-glycerol + octadecanoate + H(+). The enzyme catalyses a 1,2-diacyl-sn-glycerol + H2O = a 2-acylglycerol + a fatty acid + H(+). It carries out the reaction a 1,3-diacyl-sn-glycerol + H2O = a 1-acyl-sn-glycerol + a fatty acid + H(+). It catalyses the reaction 1-octadecanoyl-2-(9Z-octadecenoyl)-sn-glycerol + H2O = 2-(9Z-octadecenoyl)-glycerol + octadecanoate + H(+). The catalysed reaction is 1-octadecanoyl-2-(4Z,7Z,10Z,13Z,16Z,19Z-docosahexaenoyl)-sn-glycerol + H2O = 2-(4Z,7Z,10Z,13Z,16Z,19Z-docosahexaenoyl)-glycerol + octadecanoate + H(+). The enzyme catalyses 1,2-didecanoylglycerol + H2O = decanoylglycerol + decanoate + H(+). Catalyzes the hydrolysis of diacylglycerol in vitro and may function as a key regulator in lipid metabolism, namely by regulating the intracellular levels of diacylglycerol. 1,2-diacyl-sn-glycerols are the preferred substrate over 1,3-diacyl-sn-glycerols. The enzyme hydrolyzes stearate in preference to palmitate from the sn-1 position of 1,2-diacyl-sn-glycerols. The protein is sn-1-specific diacylglycerol lipase ABHD11 of Xenopus tropicalis (Western clawed frog).